A 97-amino-acid polypeptide reads, in one-letter code: Large ribosomal subunit protein uL23 (97 aa).

Belongs to the universal ribosomal protein uL23 family. As to quaternary structure, part of the 50S ribosomal subunit. Contacts protein L29, and trigger factor when it is bound to the ribosome.

Functionally, one of the early assembly proteins it binds 23S rRNA. One of the proteins that surrounds the polypeptide exit tunnel on the outside of the ribosome. Forms the main docking site for trigger factor binding to the ribosome. The protein is Large ribosomal subunit protein uL23 of Mesorhizobium japonicum (strain LMG 29417 / CECT 9101 / MAFF 303099) (Mesorhizobium loti (strain MAFF 303099)).